The chain runs to 675 residues: Putative methyl-accepting chemotaxis AlkN (675 aa).

Transmembrane regions (helical) follow at residues 24-44 (IALY…FLLS) and 303-323 (FPSV…FFII). Residues 343–394 (QRNQAAILRLLDELGDLADGDLTVQATVTEDFTGAIADSINYSIDQLRNLVQ) enclose the HAMP domain. Positions 399-635 (SAVQVASAAQ…HISNTMNVIQ (237 aa)) constitute a Methyl-accepting transducer domain.

This sequence belongs to the methyl-accepting chemotaxis (MCP) protein family.

The protein localises to the membrane. It functions in the pathway hydrocarbon metabolism; alkane degradation. Chemotactic-signal transducers respond to changes in the concentration of attractants and repellents in the environment, transduce a signal from the outside to the inside of the cell, and facilitate sensory adaptation through the variation of the level of methylation. In Alcanivorax borkumensis (strain ATCC 700651 / DSM 11573 / NCIMB 13689 / SK2), this protein is Putative methyl-accepting chemotaxis AlkN.